The primary structure comprises 368 residues: C2H2 type master regulator of conidiophore development BrlA (368 aa).

The C2H2-type 1; degenerate zinc-finger motif lies at 268 to 292 (CKCDYPGCHKAFRRNEHLKRHKQTF). The segment at 300–323 (FSCEFCGKDQFNRQDNLNNHRKLH) adopts a C2H2-type 2 zinc-finger fold. The segment at 338-368 (AAVPIIEQEERSRKRRAPPKSKSADKRVDDY) is disordered. Residues 359–368 (KSADKRVDDY) show a composition bias toward basic and acidic residues.

The protein resides in the nucleus. In terms of biological role, brlA, abaA and wetA are pivotal regulators of conidiophore development and conidium maturation. They act individually and together to regulate their own expression and that of numerous other sporulation-specific genes. BrlA, abaA and wetA act together to positively regulate the expression of the Pks1 gene cluster that mediates the biosynthesis of an anthraquinone derivative pigment that contributes to conidial pigmentation that provides protection from UV radiation, heat and cold stress. The protein is C2H2 type master regulator of conidiophore development BrlA of Metarhizium robertsii (strain ARSEF 23 / ATCC MYA-3075) (Metarhizium anisopliae (strain ARSEF 23)).